The chain runs to 152 residues: Transcriptional regulator MraZ (152 aa).

SpoVT-AbrB domains follow at residues 5–52 (VTSI…PLHE) and 81–124 (ATEC…QDKQ).

This sequence belongs to the MraZ family. Forms oligomers.

The protein localises to the cytoplasm. It is found in the nucleoid. This is Transcriptional regulator MraZ from Actinobacillus pleuropneumoniae serotype 5b (strain L20).